Reading from the N-terminus, the 98-residue chain is NADH-ubiquinone oxidoreductase chain 4L (98 aa).

3 consecutive transmembrane segments (helical) span residues 1–21 (MPYI…GTLM), 29–49 (SLLC…LLSL), and 61–81 (LILL…LVMI).

Belongs to the complex I subunit 4L family. In terms of assembly, core subunit of respiratory chain NADH dehydrogenase (Complex I) which is composed of 45 different subunits.

The protein localises to the mitochondrion inner membrane. The enzyme catalyses a ubiquinone + NADH + 5 H(+)(in) = a ubiquinol + NAD(+) + 4 H(+)(out). In terms of biological role, core subunit of the mitochondrial membrane respiratory chain NADH dehydrogenase (Complex I) which catalyzes electron transfer from NADH through the respiratory chain, using ubiquinone as an electron acceptor. Part of the enzyme membrane arm which is embedded in the lipid bilayer and involved in proton translocation. This chain is NADH-ubiquinone oxidoreductase chain 4L (MT-ND4L), found in Elephas maximus (Indian elephant).